Here is a 276-residue protein sequence, read N- to C-terminus: Large ribosomal subunit protein uL2 (276 aa).

Disordered regions lie at residues 1 to 20 (MGIKKYNPTTNGRRNMTTND) and 219 to 276 (TVRG…RRKK). Residues 7 to 20 (NPTTNGRRNMTTND) show a composition bias toward polar residues.

Belongs to the universal ribosomal protein uL2 family. In terms of assembly, part of the 50S ribosomal subunit. Forms a bridge to the 30S subunit in the 70S ribosome.

Its function is as follows. One of the primary rRNA binding proteins. Required for association of the 30S and 50S subunits to form the 70S ribosome, for tRNA binding and peptide bond formation. It has been suggested to have peptidyltransferase activity; this is somewhat controversial. Makes several contacts with the 16S rRNA in the 70S ribosome. This is Large ribosomal subunit protein uL2 from Bacillus cereus (strain Q1).